The sequence spans 211 residues: ATP phosphoribosyltransferase (211 aa).

The protein belongs to the ATP phosphoribosyltransferase family. Short subfamily. As to quaternary structure, heteromultimer composed of HisG and HisZ subunits.

It is found in the cytoplasm. It carries out the reaction 1-(5-phospho-beta-D-ribosyl)-ATP + diphosphate = 5-phospho-alpha-D-ribose 1-diphosphate + ATP. It participates in amino-acid biosynthesis; L-histidine biosynthesis; L-histidine from 5-phospho-alpha-D-ribose 1-diphosphate: step 1/9. Its function is as follows. Catalyzes the condensation of ATP and 5-phosphoribose 1-diphosphate to form N'-(5'-phosphoribosyl)-ATP (PR-ATP). Has a crucial role in the pathway because the rate of histidine biosynthesis seems to be controlled primarily by regulation of HisG enzymatic activity. The polypeptide is ATP phosphoribosyltransferase (Thermosynechococcus vestitus (strain NIES-2133 / IAM M-273 / BP-1)).